Here is an 814-residue protein sequence, read N- to C-terminus: Leucine--tRNA ligase (814 aa).

The short motif at Pro-42 to His-52 is the 'HIGH' region element. A 'KMSKS' region motif is present at residues Lys-582–Ser-586. Lys-585 serves as a coordination point for ATP.

It belongs to the class-I aminoacyl-tRNA synthetase family.

The protein resides in the cytoplasm. It carries out the reaction tRNA(Leu) + L-leucine + ATP = L-leucyl-tRNA(Leu) + AMP + diphosphate. The sequence is that of Leucine--tRNA ligase from Herpetosiphon aurantiacus (strain ATCC 23779 / DSM 785 / 114-95).